The chain runs to 150 residues: Globin-2 (150 aa).

The Globin domain maps to 11-150; it reads PLSDAEKNKI…MICILLSSAY (140 aa). 2 residues coordinate heme b: His74 and His106.

Belongs to the globin family. As to quaternary structure, monomer.

This chain is Globin-2, found in Mordacia mordax (Southern hemisphere lamprey).